The primary structure comprises 84 residues: Apoptosis inhibitor Rv3654c (84 aa).

The signal sequence occupies residues 1–39 (MVARHRAQAAADLASLAAAARLPSGLAAACARATLVARA).

As to quaternary structure, interacts with human polypyrimidine tract binding protein-associated splicing factor (PSF).

The protein localises to the secreted. It is found in the host cytoplasm. Effector protein that participates in the suppression of macrophage apoptosis by blocking the extrinsic pathway. Recognizes the host polypyrimidine tract binding protein-associated splicing factor (PSF), which probably leads to its cleavage, diminishing the level of caspase-8 in macrophages. The polypeptide is Apoptosis inhibitor Rv3654c (Mycobacterium tuberculosis (strain ATCC 25618 / H37Rv)).